Consider the following 419-residue polypeptide: UDP-N-acetylglucosamine 1-carboxyvinyltransferase (419 aa).

22-23 is a binding site for phosphoenolpyruvate; sequence KN. Arg95 is a UDP-N-acetyl-alpha-D-glucosamine binding site. Cys119 serves as the catalytic Proton donor. The residue at position 119 (Cys119) is a 2-(S-cysteinyl)pyruvic acid O-phosphothioketal. UDP-N-acetyl-alpha-D-glucosamine-binding positions include 164 to 167, Asp308, and Ile330; that span reads KVSV.

It belongs to the EPSP synthase family. MurA subfamily.

The protein localises to the cytoplasm. The enzyme catalyses phosphoenolpyruvate + UDP-N-acetyl-alpha-D-glucosamine = UDP-N-acetyl-3-O-(1-carboxyvinyl)-alpha-D-glucosamine + phosphate. Its pathway is cell wall biogenesis; peptidoglycan biosynthesis. Functionally, cell wall formation. Adds enolpyruvyl to UDP-N-acetylglucosamine. This is UDP-N-acetylglucosamine 1-carboxyvinyltransferase from Rickettsia conorii (strain ATCC VR-613 / Malish 7).